The following is a 739-amino-acid chain: MTLEMSPEQIQESKIYREWGLTDEEYLKIKDEILGGRLPNFTETGMYAVMWSEHCCYKNSKPVLKKFPTTGPQVLMGPGEGAGVVDIGDDLAVVFKAESHNHPSYVEPYEGAATGSGGIIRDIFSMGARPIAILDSLRFGPIDNGKTRHIVDQVTAGIAGYGNCIGIPTVGGEVAFDESYAGNPLVNVMCVGLIEHKHIQKGQAKGVGNSIFYVGAKTGRDGIHGASFASKEFGSGSETQRSAVQVGDPFMEKLLLEACIEVIQNHGDILVGIQDMGAAGLVSSTSEMASKAGSGLRLNLDNVPQRETEMIPYEMMLSESQERMVLCVKKGHEQEIIDLFKKYDLDAVNIGEVTDDGFYTLYHKGQMVAHVPVDSLAEDAPTYYREAKVPERIQKFTDSEKYLPEITDSAVSEIFKKLLAQPTIASKKSIYETYDSRVMTNTVVAPGSDAAVLRVRGTNKALAMTTDCNARYLYLDPEKGGAIAVAEAARNIVASGGKPLAITDCLNFGNPEKPEQFWELTTAADGISRSCLALDTPVISGNVSLYNETNGSAILPTPMIGMVGLIEDVKNITTQEFKKAGDLIVLVGQIFDDFSGSELQKMLTGEISGKIDFDLETEKVNQDFVLKAITDGLINSAHDLSEGGLAIALAESAFANGLGIDVEVDLSNAQLFSETQGRFVLSISPENQAAFEKLLTESSASSEVIGKVTDNGILKINELSISTDEAVSIYEGALPCLMK.

Residue His-54 is part of the active site. ATP contacts are provided by Tyr-57 and Lys-96. Glu-98 is a Mg(2+) binding site. Residues 99–102 (SHNH) and Arg-121 contribute to the substrate site. His-100 acts as the Proton acceptor in catalysis. Mg(2+) is bound at residue Asp-122. Gln-245 is a substrate binding site. Residue Asp-275 coordinates Mg(2+). A substrate-binding site is contributed by 319–321 (ESQ). 2 residues coordinate ATP: Asp-504 and Gly-541. Mg(2+) is bound at residue Asn-542. Ser-544 provides a ligand contact to substrate.

This sequence belongs to the FGAMS family. In terms of assembly, monomer. Part of the FGAM synthase complex composed of 1 PurL, 1 PurQ and 2 PurS subunits.

It is found in the cytoplasm. The catalysed reaction is N(2)-formyl-N(1)-(5-phospho-beta-D-ribosyl)glycinamide + L-glutamine + ATP + H2O = 2-formamido-N(1)-(5-O-phospho-beta-D-ribosyl)acetamidine + L-glutamate + ADP + phosphate + H(+). It functions in the pathway purine metabolism; IMP biosynthesis via de novo pathway; 5-amino-1-(5-phospho-D-ribosyl)imidazole from N(2)-formyl-N(1)-(5-phospho-D-ribosyl)glycinamide: step 1/2. Functionally, part of the phosphoribosylformylglycinamidine synthase complex involved in the purines biosynthetic pathway. Catalyzes the ATP-dependent conversion of formylglycinamide ribonucleotide (FGAR) and glutamine to yield formylglycinamidine ribonucleotide (FGAM) and glutamate. The FGAM synthase complex is composed of three subunits. PurQ produces an ammonia molecule by converting glutamine to glutamate. PurL transfers the ammonia molecule to FGAR to form FGAM in an ATP-dependent manner. PurS interacts with PurQ and PurL and is thought to assist in the transfer of the ammonia molecule from PurQ to PurL. The polypeptide is Phosphoribosylformylglycinamidine synthase subunit PurL (Lactococcus lactis subsp. cremoris (Streptococcus cremoris)).